The chain runs to 100 residues: MAKKSMIERERKREELVSKYEKKRLELKSKLKKTAEYEEKLEVYKKIQEIPRNAFPSRLRNRCWVTGRSRGYYRDFGLSRHVLREMVHDCLLPGVTKSSW.

The protein belongs to the universal ribosomal protein uS14 family. Part of the 30S ribosomal subunit.

The protein localises to the plastid. It is found in the chloroplast. Its function is as follows. Binds 16S rRNA, required for the assembly of 30S particles. This is Small ribosomal subunit protein uS14c from Guillardia theta (Cryptophyte).